The following is a 223-amino-acid chain: Ribose-5-phosphate isomerase A (223 aa).

Substrate is bound by residues 32 to 35 (TGST), 85 to 88 (DGAD), and 98 to 101 (KGGG). Glu-107 functions as the Proton acceptor in the catalytic mechanism. Lys-125 lines the substrate pocket.

Belongs to the ribose 5-phosphate isomerase family. As to quaternary structure, homodimer.

It catalyses the reaction aldehydo-D-ribose 5-phosphate = D-ribulose 5-phosphate. The protein operates within carbohydrate degradation; pentose phosphate pathway; D-ribose 5-phosphate from D-ribulose 5-phosphate (non-oxidative stage): step 1/1. Functionally, catalyzes the reversible conversion of ribose-5-phosphate to ribulose 5-phosphate. The polypeptide is Ribose-5-phosphate isomerase A (Pseudomonas syringae pv. tomato (strain ATCC BAA-871 / DC3000)).